We begin with the raw amino-acid sequence, 145 residues long: Acidic phospholipase A2 1 (145 aa).

The signal sequence occupies residues 1-21; sequence MYPAHLLVLLAVCVSLLGATA. Positions 22-27 are excised as a propeptide; sequence IPPLPL. Intrachain disulfides connect cysteine 38-cysteine 98, cysteine 54-cysteine 144, cysteine 56-cysteine 72, cysteine 71-cysteine 125, cysteine 78-cysteine 118, cysteine 87-cysteine 111, and cysteine 105-cysteine 116. The Ca(2+) site is built by tyrosine 55, glycine 57, and glycine 59. Histidine 75 is a catalytic residue. Residue aspartate 76 coordinates Ca(2+). The active site involves aspartate 119.

Belongs to the phospholipase A2 family. Group I subfamily. D49 sub-subfamily. As to quaternary structure, monomer. Ca(2+) serves as cofactor. In terms of tissue distribution, expressed by the venom gland.

It localises to the secreted. The enzyme catalyses a 1,2-diacyl-sn-glycero-3-phosphocholine + H2O = a 1-acyl-sn-glycero-3-phosphocholine + a fatty acid + H(+). PLA2 catalyzes the calcium-dependent hydrolysis of the 2-acyl groups in 3-sn-phosphoglycerides. This Laticauda semifasciata (Black-banded sea krait) protein is Acidic phospholipase A2 1.